Consider the following 265-residue polypeptide: Synaptoporin (265 aa).

Residues 1 to 4 (MCMV) lie on the Cytoplasmic side of the membrane. In terms of domain architecture, MARVEL spans 1–202 (MCMVIFAPLF…NIWFVFKETG (202 aa)). Residues 5 to 25 (IFAPLFAMFAFATCGGYSGGL) traverse the membrane as a helical segment. The Vesicular segment spans residues 26–81 (RLSVDCVNKTESNLSIDIAFAYPFRLQQVTFEVPTCEGKEQQKLALVGDSSSSAEF). Residues Asn33 and Asn38 are each glycosylated (N-linked (GlcNAc...) asparagine). The helical transmembrane segment at 82 to 102 (FVTVAVFAFLYSLAATVVYIF) threads the bilayer. Residues 103-114 (FQNKYRENNRGP) are Cytoplasmic-facing. Residues 115–135 (LIDFIVTVVFSFLWLVGSSAW) form a helical membrane-spanning segment. Residues 136-177 (AKGLSDVKVATDPKEVLLLMSACKQPSNKCMAVHSPVMSSLN) are Vesicular-facing. The helical transmembrane segment at 178–198 (TSVVFGFLNFILWAGNIWFVF) threads the bilayer. Residues 199 to 265 (KETGWHSSGQ…SGPTSFNNQI (67 aa)) are Cytoplasmic-facing. Tandem repeats lie at residues 210-214 (YLSDP), 222-226 (YNQGR), 227-231 (YNQES), 232-236 (YGSSG), and 238-242 (YSQQA). The 5 X approximate repeats stretch occupies residues 210 to 242 (YLSDPMEKHSSSYNQGRYNQESYGSSGGYSQQA). Position 212 is a phosphoserine (Ser212). Over residues 221-230 (SYNQGRYNQE) the composition is skewed to polar residues. The disordered stretch occupies residues 221–265 (SYNQGRYNQESYGSSGGYSQQANLGPTSDEFGQQPSGPTSFNNQI). Residues 240 to 265 (QQANLGPTSDEFGQQPSGPTSFNNQI) are compositionally biased toward polar residues.

It belongs to the synaptophysin/synaptobrevin family.

The protein localises to the cytoplasmic vesicle. The protein resides in the secretory vesicle. It localises to the synaptic vesicle membrane. Its subcellular location is the synapse. It is found in the synaptosome. Intrinsic membrane protein of small synaptic vesicles. Probable vesicular channel protein. The polypeptide is Synaptoporin (Synpr) (Mus musculus (Mouse)).